The chain runs to 171 residues: 3-hydroxydecanoyl-[acyl-carrier-protein] dehydratase (171 aa).

The active site involves H70.

The protein belongs to the thioester dehydratase family. FabA subfamily. As to quaternary structure, homodimer.

Its subcellular location is the cytoplasm. The catalysed reaction is a (3R)-hydroxyacyl-[ACP] = a (2E)-enoyl-[ACP] + H2O. It catalyses the reaction (3R)-hydroxydecanoyl-[ACP] = (2E)-decenoyl-[ACP] + H2O. It carries out the reaction (2E)-decenoyl-[ACP] = (3Z)-decenoyl-[ACP]. It participates in lipid metabolism; fatty acid biosynthesis. Its function is as follows. Necessary for the introduction of cis unsaturation into fatty acids. Catalyzes the dehydration of (3R)-3-hydroxydecanoyl-ACP to E-(2)-decenoyl-ACP and then its isomerization to Z-(3)-decenoyl-ACP. Can catalyze the dehydratase reaction for beta-hydroxyacyl-ACPs with saturated chain lengths up to 16:0, being most active on intermediate chain length. The sequence is that of 3-hydroxydecanoyl-[acyl-carrier-protein] dehydratase from Pseudomonas syringae pv. syringae (strain B728a).